Here is a 248-residue protein sequence, read N- to C-terminus: Floral homeotic protein AGAMOUS (248 aa).

One can recognise an MADS-box domain in the interval 19-73 (RGKIEIKRIENTTNRQVTFCKRRNGLLKKAYELSVLCDAEVALIVFSSRGRLYEY). Positions 103 to 193 (AQYYQQEASK…RAKIAETERA (91 aa)) constitute a K-box domain. The tract at residues 196-219 (QQQQQQMNLMPGSSSYELVPPPHQ) is disordered. Polar residues predominate over residues 202–211 (MNLMPGSSSY).

Its subcellular location is the nucleus. In terms of biological role, probable transcription factor involved in regulating genes that determines stamen and carpel development in wild-type flowers. The protein is Floral homeotic protein AGAMOUS (AG1) of Nicotiana tabacum (Common tobacco).